The following is a 593-amino-acid chain: Glyoxylate carboligase (593 aa).

Belongs to the TPP enzyme family. In terms of assembly, homotetramer. The cofactor is Mg(2+). Thiamine diphosphate serves as cofactor.

It carries out the reaction 2 glyoxylate + H(+) = 2-hydroxy-3-oxopropanoate + CO2. It functions in the pathway organic acid metabolism; glycolate degradation; 3-phospho-D-glycerate from glycolate: step 2/4. Functionally, catalyzes the condensation of two molecules of glyoxylate to give 2-hydroxy-3-oxopropanoate (also termed tartronate semialdehyde). In Escherichia coli O157:H7, this protein is Glyoxylate carboligase (gcl).